Consider the following 197-residue polypeptide: Probable molybdenum cofactor guanylyltransferase (197 aa).

GTP contacts are provided by residues 12-14 (LAG), Lys-24, Asp-71, and Asp-103. Asp-103 is a Mg(2+) binding site.

Belongs to the MobA family. It depends on Mg(2+) as a cofactor.

It localises to the cytoplasm. The enzyme catalyses Mo-molybdopterin + GTP + H(+) = Mo-molybdopterin guanine dinucleotide + diphosphate. Functionally, transfers a GMP moiety from GTP to Mo-molybdopterin (Mo-MPT) cofactor (Moco or molybdenum cofactor) to form Mo-molybdopterin guanine dinucleotide (Mo-MGD) cofactor. The protein is Probable molybdenum cofactor guanylyltransferase of Mycobacterium avium (strain 104).